Reading from the N-terminus, the 182-residue chain is Methyl-CpG-binding domain-containing protein 5 (182 aa).

2 disordered regions span residues 1 to 56 and 80 to 126; these read MSNG…GTVD and HGTP…KPLN. The 77-residue stretch at 25-101 folds into the MBD domain; that stretch reads KRATPGDDNW…ENGDSHSEHS (77 aa). The segment covering 92–105 has biased composition (basic and acidic residues); sequence ENGDSHSEHSEGRG. Over residues 106 to 115 the composition is skewed to basic residues; sequence SARRQTKSNK.

Homodimer and heterodimer with MBD6. Interacts with DDM1 via its MBD domain. Mostly expressed in flowers, and, to a lower extent, in seedlings, buds, stems and mature seeds, but barely in roots, exclusively in root meristem cells at tips (at protein level).

The protein resides in the nucleus. The protein localises to the chromosome. Functionally, transcriptional regulator that binds CpG islands in promoters where the DNA is methylated at position 5 of cytosine within CpG dinucleotides. In addition, binds specifically methylated m(5)CpNpN but not m(5)CpNpG (N is A, T or C). Plays probably a role in gene silencing. This chain is Methyl-CpG-binding domain-containing protein 5 (MBD5), found in Arabidopsis thaliana (Mouse-ear cress).